Consider the following 185-residue polypeptide: VEVDCSRFPNTTNEEGKDVLVCTEDLRPICGTDGVTHSECLLCAYNIEYGTNISKEHDGECREAVPMDCSRYPNTTSEEGKVMILCNKALNPVCGTDGVTYDNECVLCAHNLEQGTSVGKKHDGECRKELAAVSVDCSEYPKPACTLEYRPLCGSDNKTYGNKCNFCNAVVESNGTLTLSHFGKC.

Kazal-like domains follow at residues 1-63, 64-128, and 131-185; these read VEVD…ECRE, AVPM…ECRK, and AAVS…FGKC. 9 cysteine pairs are disulfide-bonded: C5–C43, C22–C40, C30–C61, C69–C108, C86–C105, C94–C126, C137–C167, C145–C164, and C153–C185. N174 is a glycosylation site (N-linked (GlcNAc...) asparagine).

The protein localises to the secreted. This Meleagris gallopavo (Wild turkey) protein is Ovomucoid.